The chain runs to 97 residues: uncharacterized protein (97 aa).

The span at 1-24 (MTQKNGADRPDDYKRFSSLDKEYD) shows a compositional bias: basic and acidic residues. The tract at residues 1–97 (MTQKNGADRP…FEGTIDQNLD (97 aa)) is disordered. Low complexity predominate over residues 31 to 43 (SNTETESVNTETQ). A compositionally biased stretch (basic and acidic residues) spans 44–53 (THNKENKNDT).

This is an uncharacterized protein from Bacillus subtilis (strain 168).